Consider the following 158-residue polypeptide: MAESINSLEELGTVAKTEAAAPVDVQKLDAQGRAYATGKRKDAVARVWVKPGTGKITVNDKEFEKYFARPVLQMILQQPIVASNRAGQFDIVATVAGGGLSGQAGAVRHGISKALTYYEPGLRTVLKKGGFLTRDSRVVERKKYGKAKARRSFQFSKR.

It belongs to the universal ribosomal protein uS9 family.

The chain is Small ribosomal subunit protein uS9 from Brucella melitensis biotype 1 (strain ATCC 23456 / CCUG 17765 / NCTC 10094 / 16M).